A 283-amino-acid polypeptide reads, in one-letter code: Phosphatidylserine decarboxylase proenzyme (283 aa).

Catalysis depends on charge relay system; for autoendoproteolytic cleavage activity residues aspartate 88, histidine 145, and serine 248. Serine 248 serves as the catalytic Schiff-base intermediate with substrate; via pyruvic acid; for decarboxylase activity. Position 248 is a pyruvic acid (Ser); by autocatalysis (serine 248).

The protein belongs to the phosphatidylserine decarboxylase family. PSD-B subfamily. Prokaryotic type I sub-subfamily. As to quaternary structure, heterodimer of a large membrane-associated beta subunit and a small pyruvoyl-containing alpha subunit. The cofactor is pyruvate. In terms of processing, is synthesized initially as an inactive proenzyme. Formation of the active enzyme involves a self-maturation process in which the active site pyruvoyl group is generated from an internal serine residue via an autocatalytic post-translational modification. Two non-identical subunits are generated from the proenzyme in this reaction, and the pyruvate is formed at the N-terminus of the alpha chain, which is derived from the carboxyl end of the proenzyme. The autoendoproteolytic cleavage occurs by a canonical serine protease mechanism, in which the side chain hydroxyl group of the serine supplies its oxygen atom to form the C-terminus of the beta chain, while the remainder of the serine residue undergoes an oxidative deamination to produce ammonia and the pyruvoyl prosthetic group on the alpha chain. During this reaction, the Ser that is part of the protease active site of the proenzyme becomes the pyruvoyl prosthetic group, which constitutes an essential element of the active site of the mature decarboxylase.

It localises to the cell membrane. The enzyme catalyses a 1,2-diacyl-sn-glycero-3-phospho-L-serine + H(+) = a 1,2-diacyl-sn-glycero-3-phosphoethanolamine + CO2. Its pathway is phospholipid metabolism; phosphatidylethanolamine biosynthesis; phosphatidylethanolamine from CDP-diacylglycerol: step 2/2. Catalyzes the formation of phosphatidylethanolamine (PtdEtn) from phosphatidylserine (PtdSer). This Methylibium petroleiphilum (strain ATCC BAA-1232 / LMG 22953 / PM1) protein is Phosphatidylserine decarboxylase proenzyme.